A 316-amino-acid chain; its full sequence is Ribosomal RNA small subunit methyltransferase H (316 aa).

S-adenosyl-L-methionine-binding positions include 35 to 37 (AGH), D55, F84, D105, and Q112.

The protein belongs to the methyltransferase superfamily. RsmH family.

Its subcellular location is the cytoplasm. The enzyme catalyses cytidine(1402) in 16S rRNA + S-adenosyl-L-methionine = N(4)-methylcytidine(1402) in 16S rRNA + S-adenosyl-L-homocysteine + H(+). Specifically methylates the N4 position of cytidine in position 1402 (C1402) of 16S rRNA. This is Ribosomal RNA small subunit methyltransferase H from Streptococcus pneumoniae (strain 70585).